A 90-amino-acid chain; its full sequence is uncharacterized protein (90 aa).

This is an uncharacterized protein from Methanocaldococcus jannaschii (strain ATCC 43067 / DSM 2661 / JAL-1 / JCM 10045 / NBRC 100440) (Methanococcus jannaschii).